The sequence spans 119 residues: Hydrogenase maturation factor HypA (119 aa).

Histidine 2 is a Ni(2+) binding site. Zn(2+) contacts are provided by cysteine 73, cysteine 76, cysteine 89, and cysteine 92.

The protein belongs to the HypA/HybF family.

In terms of biological role, involved in the maturation of [NiFe] hydrogenases. Required for nickel insertion into the metal center of the hydrogenase. In Cupriavidus necator (strain ATCC 17699 / DSM 428 / KCTC 22496 / NCIMB 10442 / H16 / Stanier 337) (Ralstonia eutropha), this protein is Hydrogenase maturation factor HypA.